We begin with the raw amino-acid sequence, 52 residues long: Light-harvesting protein B-870 alpha chain (52 aa).

At 1-15 the chain is on the cytoplasmic side; the sequence is MAKFYKIWLIFDPRR. Residues 16 to 36 form a helical membrane-spanning segment; the sequence is VFVAQGVFLFLLAAMIHLVVL. Residue histidine 32 coordinates a bacteriochlorophyll. At 37–52 the chain is on the periplasmic side; the sequence is SSGLNWFEAAAAVGGQ.

The protein belongs to the antenna complex alpha subunit family. The core complex is formed by different alpha and beta chains, binding bacteriochlorophyll molecules, and arranged most probably in tetrameric structures disposed around the reaction center. The non-pigmented gamma chains may constitute additional components.

It is found in the cell inner membrane. In terms of biological role, antenna complexes are light-harvesting systems, which transfer the excitation energy to the reaction centers. This Roseobacter denitrificans (strain ATCC 33942 / OCh 114) (Erythrobacter sp. (strain OCh 114)) protein is Light-harvesting protein B-870 alpha chain (pufA).